The following is a 197-amino-acid chain: ATP-dependent Clp protease proteolytic subunit (197 aa).

Ser-100 acts as the Nucleophile in catalysis. His-125 is a catalytic residue.

The protein belongs to the peptidase S14 family. In terms of assembly, component of the chloroplastic Clp protease core complex.

It localises to the plastid. The protein resides in the chloroplast stroma. It catalyses the reaction Hydrolysis of proteins to small peptides in the presence of ATP and magnesium. alpha-casein is the usual test substrate. In the absence of ATP, only oligopeptides shorter than five residues are hydrolyzed (such as succinyl-Leu-Tyr-|-NHMec, and Leu-Tyr-Leu-|-Tyr-Trp, in which cleavage of the -Tyr-|-Leu- and -Tyr-|-Trp bonds also occurs).. Its function is as follows. Cleaves peptides in various proteins in a process that requires ATP hydrolysis. Has a chymotrypsin-like activity. Plays a major role in the degradation of misfolded proteins. The polypeptide is ATP-dependent Clp protease proteolytic subunit (Angiopteris evecta (Mule's foot fern)).